Reading from the N-terminus, the 63-residue chain is Bowman-birk type proteinase inhibitor (63 aa).

7 cysteine pairs are disulfide-bonded: C7/C61, C8/C23, C11/C57, C13/C21, C31/C38, C35/C50, and C40/C48.

Functionally, inhibits trypsin, chymotrypsin, plasmin and factor XIIa. Does not inhibit factor Xa, thrombin and plasma kallikrein. The sequence is that of Bowman-birk type proteinase inhibitor from Amburana acreana (Cerejeira).